A 364-amino-acid polypeptide reads, in one-letter code: BTB/POZ and TAZ domain-containing protein 2 (364 aa).

Residues 34-106 (SDVEIVTSDN…LYSSSLTEDE (73 aa)) enclose the BTB domain. Positions 203–212 (RKKRRRRHRK) match the Nuclear localization signal motif. Residues 215 to 316 (DLYMQLSEAM…PDSCRVPLCR (102 aa)) form a TAZ-type zinc finger. The interval 327–350 (KMGEDTKWKLLVTRVVSAKAMTSL) is caM-binding.

Interacts with CUL3A. Interacts with GTE11/BET10 through the BTB domain. As to expression, preferentially expressed in young leaves and roots.

Its subcellular location is the nucleus. The protein resides in the cytoplasm. It participates in protein modification; protein ubiquitination. May act as a substrate-specific adapter of an E3 ubiquitin-protein ligase complex (CUL3-RBX1-BTB) which mediates the ubiquitination and subsequent proteasomal degradation of target proteins. Plays a key role as a component of the TAC1-mediated telomerase activation pathway certainly by targeting a telomerase repressor to degradation. Seems to occupy an integral position in a complex signaling network that perceives, integrates, and responds to multiple, and sometimes competing, signals. Enhances responses to auxin in postgermination and vegetative development. Also negatively regulates ABA- and sugar-mediated inhibition of the germination. Essential for female and male gametophyte development. The protein is BTB/POZ and TAZ domain-containing protein 2 (BT2) of Arabidopsis thaliana (Mouse-ear cress).